A 932-amino-acid chain; its full sequence is Chitin synthase regulatory factor 3 (932 aa).

Residues 1–16 are compositionally biased toward basic and acidic residues; sequence MKDSHSSRRKYEKEKL. Disordered stretches follow at residues 1 to 53, 264 to 356, and 374 to 406; these read MKDS…PTSR, TLEE…LQQP, and EVPAPTFDRRNVSRNSNNNSPEGYDNNRTNPTV. Polar residues-rich tracts occupy residues 35–53, 274–285, and 308–319; these read SGNTASSSSPTLQFRPTSR, DSITNTVSNASS, and SHFSSTDSNTDS. The segment covering 337–349 has biased composition (basic and acidic residues); it reads KSSETLKNPRNDD. S393 carries the post-translational modification Phosphoserine. Sel1-like repeat units lie at residues 638 to 674, 675 to 710, 711 to 747, 751 to 788, 789 to 825, 826 to 863, and 864 to 899; these read PEALFLIGQFHSQGVLGFRRDLGKAFELYSLAAKKGH, PLSNYRVAVCLQTGTGVKPDTSKCVAIYKKAAEMDV, VEAMFRIALIYLNGLLGQKRNISLGVQWLERACKSKG, VRAMYELAKIYEQPDRYGVSATPERKFELYKQSAVYGY, AAAQCKLGECYEHGLLGCLAEPRRSIFWYTRAAEQDY, GEAELGLSGWYLTGSEGILPKNGEEALLWAHKAACKGL, and AKAQYAVGFMMEQGIGVAADPSSAHNWYIRAAKQGF. The segment at 905–932 is disordered; the sequence is RLEEQALSSKQTHSKAPKKKQQEQCVVM.

This Schizosaccharomyces pombe (strain 972 / ATCC 24843) (Fission yeast) protein is Chitin synthase regulatory factor 3 (chr3).